We begin with the raw amino-acid sequence, 333 residues long: Protoheme IX farnesyltransferase (333 aa).

Helical transmembrane passes span 63 to 83 (LACTLGGGALAAAAAGVLNCI), 109 to 129 (AAFIGAISCTLAAAALLVSGV), 132 to 152 (LAAGLSLLGLCSYVLLYTAIL), 160 to 180 (IVIGGVAGAIPPLVGAAAASG), 188 to 208 (WLFALVMLWTPAHFWALALLL), 245 to 265 (GFGVWALPEGGLLYGLLLIPF), and 292 to 312 (WSIFYMFGICLLLVVSRLPMA).

The protein belongs to the UbiA prenyltransferase family. Protoheme IX farnesyltransferase subfamily.

The protein resides in the cell inner membrane. The enzyme catalyses heme b + (2E,6E)-farnesyl diphosphate + H2O = Fe(II)-heme o + diphosphate. It participates in porphyrin-containing compound metabolism; heme O biosynthesis; heme O from protoheme: step 1/1. In terms of biological role, converts heme B (protoheme IX) to heme O by substitution of the vinyl group on carbon 2 of heme B porphyrin ring with a hydroxyethyl farnesyl side group. The protein is Protoheme IX farnesyltransferase of Prochlorococcus marinus (strain MIT 9303).